The following is a 232-amino-acid chain: Histone H1.X (232 aa).

The H15 domain maps to 36–112; that stretch reads HHPSYMDMIK…GATGSFRMGK (77 aa). The segment at 142–232 is disordered; that stretch reads ISKAEKTKPS…LRTGTRKSYC (91 aa). A compositionally biased stretch (basic residues) spans 159–197; the sequence is KKGKPISTMKKRGVMSKKRSSKNKMAPKAKSHGLKKKGP.

It belongs to the histone H1/H5 family.

The protein localises to the nucleus. Its subcellular location is the chromosome. This Caenorhabditis elegans protein is Histone H1.X (hil-1).